Consider the following 145-residue polypeptide: MIKCFDKNNEVYNLIKNLTERLNVEILEINIFRNKNGGKIQIVLYSKNFSLGIDLMTDLHKMILLILEANLKYSFILELSTPGIDRRIKSDKEFQIFEGKKIKLMLDNEFEEGFILEAKSKSFIFKTDSKELNVFYSDVKKARLV.

Belongs to the RimP family.

The protein resides in the cytoplasm. Its function is as follows. Required for maturation of 30S ribosomal subunits. In Borreliella afzelii (strain PKo) (Borrelia afzelii), this protein is Ribosome maturation factor RimP.